Reading from the N-terminus, the 156-residue chain is 6,7-dimethyl-8-ribityllumazine synthase (156 aa).

5-amino-6-(D-ribitylamino)uracil contacts are provided by residues F22, A57 to E59, and T81 to I83. G86–T87 serves as a coordination point for (2S)-2-hydroxy-3-oxobutyl phosphate. H89 functions as the Proton donor in the catalytic mechanism. A 5-amino-6-(D-ribitylamino)uracil-binding site is contributed by F114. R128 serves as a coordination point for (2S)-2-hydroxy-3-oxobutyl phosphate.

Belongs to the DMRL synthase family. As to quaternary structure, forms an icosahedral capsid composed of 60 subunits, arranged as a dodecamer of pentamers.

The catalysed reaction is (2S)-2-hydroxy-3-oxobutyl phosphate + 5-amino-6-(D-ribitylamino)uracil = 6,7-dimethyl-8-(1-D-ribityl)lumazine + phosphate + 2 H2O + H(+). It functions in the pathway cofactor biosynthesis; riboflavin biosynthesis; riboflavin from 2-hydroxy-3-oxobutyl phosphate and 5-amino-6-(D-ribitylamino)uracil: step 1/2. Functionally, catalyzes the formation of 6,7-dimethyl-8-ribityllumazine by condensation of 5-amino-6-(D-ribitylamino)uracil with 3,4-dihydroxy-2-butanone 4-phosphate. This is the penultimate step in the biosynthesis of riboflavin. The chain is 6,7-dimethyl-8-ribityllumazine synthase from Vibrio campbellii (strain ATCC BAA-1116).